The following is a 264-amino-acid chain: Thymidylate synthase (264 aa).

Arg21 provides a ligand contact to dUMP. His51 contacts (6R)-5,10-methylene-5,6,7,8-tetrahydrofolate. 126–127 (RR) contributes to the dUMP binding site. Cys146 (nucleophile) is an active-site residue. DUMP contacts are provided by residues 166–169 (RSAD), Asn177, and 207–209 (HLY). Position 169 (Asp169) interacts with (6R)-5,10-methylene-5,6,7,8-tetrahydrofolate. Ala263 contributes to the (6R)-5,10-methylene-5,6,7,8-tetrahydrofolate binding site.

Belongs to the thymidylate synthase family. Bacterial-type ThyA subfamily. In terms of assembly, homodimer.

The protein localises to the cytoplasm. It carries out the reaction dUMP + (6R)-5,10-methylene-5,6,7,8-tetrahydrofolate = 7,8-dihydrofolate + dTMP. The protein operates within pyrimidine metabolism; dTTP biosynthesis. In terms of biological role, catalyzes the reductive methylation of 2'-deoxyuridine-5'-monophosphate (dUMP) to 2'-deoxythymidine-5'-monophosphate (dTMP) while utilizing 5,10-methylenetetrahydrofolate (mTHF) as the methyl donor and reductant in the reaction, yielding dihydrofolate (DHF) as a by-product. This enzymatic reaction provides an intracellular de novo source of dTMP, an essential precursor for DNA biosynthesis. This chain is Thymidylate synthase, found in Dechloromonas aromatica (strain RCB).